Here is a 322-residue protein sequence, read N- to C-terminus: Tetraacyldisaccharide 4'-kinase (322 aa).

54 to 61 (SVGGTGKT) is an ATP binding site.

This sequence belongs to the LpxK family.

The enzyme catalyses a lipid A disaccharide + ATP = a lipid IVA + ADP + H(+). Its pathway is glycolipid biosynthesis; lipid IV(A) biosynthesis; lipid IV(A) from (3R)-3-hydroxytetradecanoyl-[acyl-carrier-protein] and UDP-N-acetyl-alpha-D-glucosamine: step 6/6. Transfers the gamma-phosphate of ATP to the 4'-position of a tetraacyldisaccharide 1-phosphate intermediate (termed DS-1-P) to form tetraacyldisaccharide 1,4'-bis-phosphate (lipid IVA). In Francisella philomiragia subsp. philomiragia (strain ATCC 25017 / CCUG 19701 / FSC 153 / O#319-036), this protein is Tetraacyldisaccharide 4'-kinase.